A 645-amino-acid chain; its full sequence is Serine/threonine-protein kinase Nek11 (645 aa).

One can recognise a Protein kinase domain in the interval 29-287; that stretch reads YVLQQKLGSG…AIEILKIPYL (259 aa). ATP-binding positions include 35–43 and K61; that span reads LGSGSFGTV. D158 serves as the catalytic Proton acceptor. The residue at position 273 (S273) is a Phosphoserine; by CHEK1. Positions 346 to 385 form a coiled coil; sequence RLRKLQAADEKARKLKKIVEEKYEENSKRMQELRSRNFQQ. The interval 399 to 445 is disordered; that stretch reads GMEEKEEQPEGRLSCSPQDEDEERWQGREEESDEPTLENLPESQPIP.

It belongs to the protein kinase superfamily. NEK Ser/Thr protein kinase family. NIMA subfamily. As to quaternary structure, interacts with isoform 1 of NEK2. Mn(2+) is required as a cofactor. Requires Mg(2+) as cofactor. Phosphorylated by NEK2. Phosphorylation at Ser-273 is important for its activation. As to expression, poorly expressed in cerebellum, trachea, lung, appendix, and uterus.

The protein resides in the nucleus. It localises to the nucleolus. It catalyses the reaction L-seryl-[protein] + ATP = O-phospho-L-seryl-[protein] + ADP + H(+). It carries out the reaction L-threonyl-[protein] + ATP = O-phospho-L-threonyl-[protein] + ADP + H(+). With respect to regulation, autorepressed by intramolecular binding of the C-terminus which dissociates following phosphorylation by NEK2 isoform 1 in G1/S-arrested cells. NEK2 isoform 2 is largely not present in the nucleolus, and does not appear to phosphorylate NEK11. Activated in response to DNA damage. Inhibited by zinc. In terms of biological role, protein kinase which plays an important role in the G2/M checkpoint response to DNA damage. Controls degradation of CDC25A by directly phosphorylating it on residues whose phosphorylation is required for BTRC-mediated polyubiquitination and degradation. This is Serine/threonine-protein kinase Nek11 from Homo sapiens (Human).